The primary structure comprises 524 residues: L-lactate permease (524 aa).

The next 13 helical transmembrane spans lie at 12–34, 38–60, 67–89, 127–149, 156–178, 193–215, 224–246, 250–267, 297–319, 339–361, 374–396, 411–433, and 505–522; these read LAVS…TVFK, IQAA…HLPF, IVQG…VWLY, LEGA…SLGF, MLCL…VGII, SMMT…IWLM, ILPA…TIFI, LADI…ALFL, WSPF…KGLL, IEVG…VTTV, SLLK…IIGI, EAVA…IGVF, and YSFG…ILSL.

It belongs to the lactate permease family.

Its subcellular location is the cell membrane. In terms of biological role, may play a role in L-lactate transport. The chain is L-lactate permease (lctP) from Halalkalibacterium halodurans (strain ATCC BAA-125 / DSM 18197 / FERM 7344 / JCM 9153 / C-125) (Bacillus halodurans).